The primary structure comprises 473 residues: GTPase Der (473 aa).

EngA-type G domains are found at residues 5–170 (PVVA…PNQE) and 178–351 (LKLA…QSSM). GTP contacts are provided by residues 11–18 (GRPNVGKS), 58–62 (DTGGI), 123–126 (NKVD), 184–191 (GRPNVGKS), 231–235 (DTAGV), and 296–299 (NKWD). The region spanning 352-436 (FEVSTNRLTQ…PLNVVFKLNE (85 aa)) is the KH-like domain. Residues 438–454 (PYANKSDTPTKAKTQQL) show a composition bias toward polar residues. The disordered stretch occupies residues 438–473 (PYANKSDTPTKAKTQQLRQRERNRAQKFTTKDKKPR). Residues 455-473 (RQRERNRAQKFTTKDKKPR) show a composition bias toward basic and acidic residues.

Belongs to the TRAFAC class TrmE-Era-EngA-EngB-Septin-like GTPase superfamily. EngA (Der) GTPase family. In terms of assembly, associates with the 50S ribosomal subunit.

Its function is as follows. GTPase that plays an essential role in the late steps of ribosome biogenesis. This Psychrobacter arcticus (strain DSM 17307 / VKM B-2377 / 273-4) protein is GTPase Der.